Consider the following 558-residue polypeptide: Two-component response regulator-like APRR5 (558 aa).

One can recognise a Response regulatory domain in the interval 51-169 (RVLLVEADDS…ELRNLWQHVW (119 aa)). The segment at 180-233 (FPWNESVGQQKAEGASANNSNGKRDDHVVSGNGGDAQSSCTRPEMEGESADVEV) is disordered. Residues 240 to 260 (QMECAKSQFNETRLLANELQS) are a coiled coil. 2 disordered regions span residues 297–319 (SLRR…HPSS) and 535–558 (KKLA…TQAP). Residues 303 to 319 (ASENQSSGDRPSLHPSS) show a composition bias toward polar residues. In terms of domain architecture, CCT spans 509-551 (REAALTKFRMKRKDRCYEKKVRYESRKKLAEQRPRIKGQFVRQ).

Belongs to the ARR-like family. Interacts with ADO1 and ADO2. Interacts with SPY (via N-terminus). Post-translationally, phosphorylation varies throughout the diurnal cycle and enhances ADO1 binding. O-fucosylated by SPY. O-fucosylation promotes APRR5 proteolysis.

Its subcellular location is the nucleus. Transcriptional repressor of CCA1 and LHY, thereby controlling photoperiodic flowering response. Involved in the positive and negative feedback loops of the circadian clock. With RVE8, forms a negative feedback loop of the circadian clock. Expression of several members of the ARR-like family is controlled by circadian rhythm. Proteolytic substrate of the E3 ubiquitin ligase SCF(ADO1) complex. APRR9, APRR7, and APRR5 coordinately act on the upstream region of the target genes to repress their expression from noon until midnight. The particular coordinated sequential expression of APRR9, APRR7, APRR5, APRR3 and APPR1 result to circadian waves that may be at the basis of the endogenous circadian clock. Negative regulator of shade avoidance response. Involved in the inhibition of leaf expansion in shade avoidance response. The chain is Two-component response regulator-like APRR5 (APRR5) from Arabidopsis thaliana (Mouse-ear cress).